The chain runs to 146 residues: Cyanate hydratase (146 aa).

Catalysis depends on residues Arg-87, Glu-90, and Ser-113.

The protein belongs to the cyanase family.

The catalysed reaction is cyanate + hydrogencarbonate + 3 H(+) = NH4(+) + 2 CO2. Its function is as follows. Catalyzes the reaction of cyanate with bicarbonate to produce ammonia and carbon dioxide. This Teredinibacter turnerae (strain ATCC 39867 / T7901) protein is Cyanate hydratase.